A 1026-amino-acid chain; its full sequence is Exportin-T (1026 aa).

The protein belongs to the exportin family.

It localises to the nucleus. It is found in the cytoplasm. Its function is as follows. tRNA nucleus export receptor which facilitates tRNA translocation across the nuclear pore complex. Involved in pre-tRNA splicing, probably by affecting the interaction of pre-tRNA with splicing endonuclease. This Neurospora crassa (strain ATCC 24698 / 74-OR23-1A / CBS 708.71 / DSM 1257 / FGSC 987) protein is Exportin-T (los1).